Consider the following 90-residue polypeptide: Probable Fe(2+)-trafficking protein (90 aa).

It belongs to the Fe(2+)-trafficking protein family.

In terms of biological role, could be a mediator in iron transactions between iron acquisition and iron-requiring processes, such as synthesis and/or repair of Fe-S clusters in biosynthetic enzymes. This Polaromonas sp. (strain JS666 / ATCC BAA-500) protein is Probable Fe(2+)-trafficking protein.